The following is a 615-amino-acid chain: DNA mismatch repair protein MutL (615 aa).

Residues 363–397 (FAEPAAREPVAPRYSPAPASGSRPAAPWPNAQPGY) are disordered. Over residues 364–387 (AEPAAREPVAPRYSPAPASGSRPA) the composition is skewed to low complexity.

The protein belongs to the DNA mismatch repair MutL/HexB family.

Functionally, this protein is involved in the repair of mismatches in DNA. It is required for dam-dependent methyl-directed DNA mismatch repair. May act as a 'molecular matchmaker', a protein that promotes the formation of a stable complex between two or more DNA-binding proteins in an ATP-dependent manner without itself being part of a final effector complex. The chain is DNA mismatch repair protein MutL from Shigella flexneri.